A 76-amino-acid polypeptide reads, in one-letter code: Conotoxin Im6.9 (76 aa).

The signal sequence occupies residues 1-19 (MEKLTILLLVTAVLMSTQA). Residues 20–45 (LMQSGIEKRQRAKIKFFSKRKTTAER) constitute a propeptide that is removed on maturation. 3 disulfides stabilise this stretch: C51/C65, C58/C69, and C64/C73.

It belongs to the conotoxin O2 superfamily. In terms of tissue distribution, expressed by the venom duct.

The protein localises to the secreted. Probable neurotoxin. The protein is Conotoxin Im6.9 of Conus imperialis (Imperial cone).